The sequence spans 249 residues: 2,3-bisphosphoglycerate-dependent phosphoglycerate mutase (249 aa).

Substrate is bound by residues 9–16, 22–23, Arg61, 88–91, Lys99, 115–116, and 184–185; these read RHGQSQWN, TG, ERHY, RR, and GN. His10 serves as the catalytic Tele-phosphohistidine intermediate. Glu88 (proton donor/acceptor) is an active-site residue.

The protein belongs to the phosphoglycerate mutase family. BPG-dependent PGAM subfamily. In terms of assembly, homodimer.

It catalyses the reaction (2R)-2-phosphoglycerate = (2R)-3-phosphoglycerate. Its pathway is carbohydrate degradation; glycolysis; pyruvate from D-glyceraldehyde 3-phosphate: step 3/5. Catalyzes the interconversion of 2-phosphoglycerate and 3-phosphoglycerate. The chain is 2,3-bisphosphoglycerate-dependent phosphoglycerate mutase from Xanthomonas axonopodis pv. citri (strain 306).